The chain runs to 336 residues: Telomere-binding protein cav (336 aa).

Residues 107–328 (RKKMVQPYPE…TITFQNSESE (222 aa)) are required for binding to Su(var)205. 2 disordered regions span residues 137 to 158 (RLDR…SPAR) and 199 to 218 (SSDL…SEFQ). Short sequence motifs (su(var)205-binding Pro-containing repeat) lie at residues 225–231 (PETAINE) and 289–295 (PETEMNE). Residues 308–327 (MSIGPSIDSEGTITFQNSES) are compositionally biased toward polar residues. The tract at residues 308–336 (MSIGPSIDSEGTITFQNSESEPIDVDSIA) is disordered.

Interacts (via C-terminus) with Su(var)205 dimer (via hinge and chromoshadow domain) and with moi to form the terminin, telomere-capping, complex. Interacts with HP6, which is also part of the terminin complex.

The protein resides in the nucleus. It is found in the chromosome. It localises to the telomere. Its function is as follows. Binds to chromosome ends in a sequence-dependent manner and is required for telomere capping. This is Telomere-binding protein cav from Drosophila sechellia (Fruit fly).